The sequence spans 248 residues: B-box zinc finger protein 24 (248 aa).

Positions 5, 8, 28, 33, 57, 60, 80, and 85 each coordinate Zn(2+). The B box-type 1; atypical zinc finger occupies 5-47; that stretch reads CDVCEKAPATVICCADEAALCPQCDIEIHAANKLASKHQRLHL. The B box-type 2; atypical zinc finger occupies 57–99; that stretch reads CDICQEKAAFIFCVEDRALLCRDCDESIHVANSRSANHQRFLA. The segment at 115-148 is disordered; that stretch reads IEKNQPEPSNNQQKANQIPAKSTSQQQQQPSSAT. Residues 120–130 are compositionally biased toward polar residues; the sequence is PEPSNNQQKAN. Over residues 131-148 the composition is skewed to low complexity; that stretch reads QIPAKSTSQQQQQPSSAT. Residues 226-229 carry the Nuclear localization signal motif; sequence KKPR. The segment at 236–248 is interaction with COP1; it reads DDDEEHFIVPDLG.

As to quaternary structure, interacts with COP1 WD40 domain. Interacts with HY5 and HYH. Interacts with RCD1 and TRP4. Post-translationally, COP1-mediated ubiquitination and subsequent proteasomal degradation of BBX24/STO occurs in the dark. As to expression, high expression in leaves and lower in roots and flowers.

It is found in the nucleus. In terms of biological role, acts as a negative regulator of seedling photomorphogenesis and light-regulated inhibition of hypocotyl elongation. BBX24/STO and BBX25/STH function as transcriptional corepressors of HY5 activity, leading to the down-regulation of BBX22 expression. BBX24/STO acts additively with BBX25/STH during de-etiolation and the hypocotyl shade avoidance response. Functions as a negative regulator of photomorphogenic UV-B responses by interacting with both COP1 and HY5. May act as a transcription factor in the salt-stress response. The protein is B-box zinc finger protein 24 of Arabidopsis thaliana (Mouse-ear cress).